A 322-amino-acid chain; its full sequence is Transaldolase (322 aa).

The active-site Schiff-base intermediate with substrate is the lysine 136.

Belongs to the transaldolase family. Type 1 subfamily. As to quaternary structure, homodimer.

It localises to the cytoplasm. It carries out the reaction D-sedoheptulose 7-phosphate + D-glyceraldehyde 3-phosphate = D-erythrose 4-phosphate + beta-D-fructose 6-phosphate. It participates in carbohydrate degradation; pentose phosphate pathway; D-glyceraldehyde 3-phosphate and beta-D-fructose 6-phosphate from D-ribose 5-phosphate and D-xylulose 5-phosphate (non-oxidative stage): step 2/3. In terms of biological role, transaldolase is important for the balance of metabolites in the pentose-phosphate pathway. The chain is Transaldolase from Xanthomonas oryzae pv. oryzae (strain KACC10331 / KXO85).